A 401-amino-acid chain; its full sequence is Imidazolonepropionase (401 aa).

His-66 and His-68 together coordinate Fe(3+). Positions 66 and 68 each coordinate Zn(2+). Positions 75, 138, and 171 each coordinate 4-imidazolone-5-propanoate. Tyr-138 provides a ligand contact to N-formimidoyl-L-glutamate. His-236 provides a ligand contact to Fe(3+). His-236 is a binding site for Zn(2+). Gln-239 is a 4-imidazolone-5-propanoate binding site. Position 311 (Asp-311) interacts with Fe(3+). Asp-311 provides a ligand contact to Zn(2+). N-formimidoyl-L-glutamate is bound by residues Asn-313 and Gly-315. Residue Thr-316 coordinates 4-imidazolone-5-propanoate.

The protein belongs to the metallo-dependent hydrolases superfamily. HutI family. Zn(2+) is required as a cofactor. Fe(3+) serves as cofactor.

It localises to the cytoplasm. The catalysed reaction is 4-imidazolone-5-propanoate + H2O = N-formimidoyl-L-glutamate. The protein operates within amino-acid degradation; L-histidine degradation into L-glutamate; N-formimidoyl-L-glutamate from L-histidine: step 3/3. Catalyzes the hydrolytic cleavage of the carbon-nitrogen bond in imidazolone-5-propanoate to yield N-formimidoyl-L-glutamate. It is the third step in the universal histidine degradation pathway. This Pseudomonas putida (strain GB-1) protein is Imidazolonepropionase.